A 122-amino-acid chain; its full sequence is Thioredoxin H-type (122 aa).

Residues 2-118 (AAEEGVVIAC…IVKHVGATAA (117 aa)) form the Thioredoxin domain. Residues C40 and C43 are joined by a disulfide bond.

The protein localises to the cytoplasm. Functionally, participates in various redox reactions through the reversible oxidation of the active center dithiol to a disulfide. The H form is known to activate a number of cytosolic enzymes. This chain is Thioredoxin H-type (TRXH), found in Oryza sativa subsp. indica (Rice).